The chain runs to 471 residues: Tryptophan--tRNA ligase, cytoplasmic (471 aa).

The region spanning 8–64 (SLLELFNSIATQGELVRSLKAGNASKDEIDSAVKMLVSLKMSYKAAAGEDYKADCPP) is the WHEP-TRS domain. The interval 59-79 (KADCPPGNPAPTSNHGPDATE) is disordered. Lys-154 is subject to N6-succinyllysine. Residues 164 to 173 (PSSEAMHVGH) carry the 'HIGH' region motif. A 'KMSKS' region motif is present at residues 349 to 353 (KMSAS). Ser-351 is modified (phosphoserine).

The protein belongs to the class-I aminoacyl-tRNA synthetase family. Homodimer. Interacts with an oxidized form of GAPDH. GAPDH stimulates the aminoacylation activity of isoform 2. In terms of processing, proteolytic cleavage generates 2 forms; T1-TrpRS and T2-TrpRS.

It localises to the cytoplasm. The catalysed reaction is tRNA(Trp) + L-tryptophan + ATP = L-tryptophyl-tRNA(Trp) + AMP + diphosphate + H(+). Functionally, catalyzes the attachment of tryptophan to tRNA(Trp) in a two-step reaction: tryptophan is first activated by ATP to form Trp-AMP and then transferred to the acceptor end of the tRNA(Trp). In terms of biological role, has no angiostatic activity. Possesses an angiostatic activity but has no aminoacylation activity. Inhibits fluid shear stress-activated responses of endothelial cells. Regulates ERK, Akt, and eNOS activation pathways that are associated with angiogenesis, cytoskeletal reorganization and shear stress-responsive gene expression. Its function is as follows. Has an angiostatic activity. The sequence is that of Tryptophan--tRNA ligase, cytoplasmic from Homo sapiens (Human).